Here is a 213-residue protein sequence, read N- to C-terminus: MELNKYIDHTLLKADATSADIKKICDEAIKYDFKSVCVNSCYTSLVKKSLENSSALVCTVVGFPLGAMSTKSKAFEAKTAIEDGADEIDMVINIGKLKEKDYDYVEKDIQAVRDATKGKVLKVIIETCLLTDEEKKKACEISVKCGADFVKTSTGFSTGGAKVEDVKLMKDTVADKAMVKASGGIHSREEALAMIENGADRIGASSGIKIVEG.

The active-site Proton donor/acceptor is Asp89. Residue Lys151 is the Schiff-base intermediate with acetaldehyde of the active site. Lys180 acts as the Proton donor/acceptor in catalysis.

Belongs to the DeoC/FbaB aldolase family. DeoC type 1 subfamily.

The protein resides in the cytoplasm. It carries out the reaction 2-deoxy-D-ribose 5-phosphate = D-glyceraldehyde 3-phosphate + acetaldehyde. The protein operates within carbohydrate degradation; 2-deoxy-D-ribose 1-phosphate degradation; D-glyceraldehyde 3-phosphate and acetaldehyde from 2-deoxy-alpha-D-ribose 1-phosphate: step 2/2. Functionally, catalyzes a reversible aldol reaction between acetaldehyde and D-glyceraldehyde 3-phosphate to generate 2-deoxy-D-ribose 5-phosphate. The protein is Deoxyribose-phosphate aldolase of Finegoldia magna (strain ATCC 29328 / DSM 20472 / WAL 2508) (Peptostreptococcus magnus).